Reading from the N-terminus, the 1242-residue chain is DNA polymerase catalytic subunit (1242 aa).

3 disordered regions span residues 14-38 (GAVA…RPPQ), 644-665 (LQSA…SSSS), and 1109-1162 (APQG…RKPP). Positions 653–665 (GVSPGSGSNSSSS) are enriched in low complexity. The segment covering 1111–1125 (QGSSDNGDSVTTGVV) has biased composition (polar residues). Residues 1145–1155 (ESNRRGGEPAK) show a composition bias toward basic and acidic residues.

It belongs to the DNA polymerase type-B family. Forms a complex with the ssDNA-binding protein UL57, the DNA polymerase processivity factor UL44, and the alkaline exonuclease UL98. Interacts with the putative helicase-primase complex composed of UL70, UL102 and UL105 proteins; these interactions may coordinate leading and lagging strand DNA synthesis at the replication fork.

The protein resides in the host nucleus. The catalysed reaction is DNA(n) + a 2'-deoxyribonucleoside 5'-triphosphate = DNA(n+1) + diphosphate. In terms of biological role, replicates viral genomic DNA in the late phase of lytic infection, producing long concatemeric DNA. The replication complex is composed of six viral proteins: the DNA polymerase, processivity factor, primase, primase-associated factor, helicase, and ssDNA-binding protein. The sequence is that of DNA polymerase catalytic subunit (UL54) from Homo sapiens (Human).